The sequence spans 607 residues: MSRDSGNDSEVAVTHGEVQEITEENPEIGSMHITQETDISDAPETNTDSSRQRTESTTSVSSESWQNNDEMMSNLRRAQRLLDDGATPLQIIQQIFPDFNASRIATMSENAHFAILSDLLERAPVRQKLTNYNSLADAVELFKTKKHILVLTGAGVSVSCGIPDFRSKDGIYARLRSEFPDLPDPTAMFDIRYFRENPAPFYNFAREIFPGQFVPSVSHRFIKELETSGRLLRNYTQNIDTLEHQTGIKRVVECHGSFSKCTCTRCGQKYDGNEIREEVLAMRVAHCKRCEGVIKPNIVFFGEDLGREFHQHVTEDKHKVDLIVVIGSSLKVRPVALIPHCVDKNVPQILINRESLPHYNADIELLGNCDDIIRDICFSLGGSFTELITSYDSIMEQQGKTKSQKPSQNKRQLISQEDFLNICMKEKRNDDSSDEPTLKKPRMSVADDSMDSEKNNFQEIQKHKSEDDDDTRNSDDILKKIKHPRLLSITEMLHDNKCVAISAHQTVFPGAECSFDLETLKLVRDVHHETHCESSCGSSCSSNADSEANQLSRAQSLDDFVLSDEDRKNTIHLDLQRADSCDGDFQYELSETIDPETFSHLCEEMRI.

The interval Met-1–Asn-68 is disordered. Over residues Glu-55–Ser-64 the composition is skewed to low complexity. Residues Lys-128–Thr-401 form the Deacetylase sirtuin-type domain. NAD(+)-binding positions include Gly-153 to Tyr-172 and Gln-237 to Asp-240. His-255 functions as the Proton acceptor in the catalytic mechanism. Cys-263, Cys-266, Cys-287, and Cys-290 together coordinate Zn(2+). NAD(+) is bound by residues Gly-327–Ser-329, Asn-352–Glu-354, and Cys-369. The segment at Glu-426 to Glu-453 is disordered.

This sequence belongs to the sirtuin family. Class I subfamily. In terms of assembly, interacts with ftt-2 and par-5. Interacts with daf-16 following heat-shock, which causes daf-16 to accumulate in the nucleus. Interaction with daf-16 is promoted by ftt-2. Interacts with transcriptional coregulator hcf-1. The cofactor is Zn(2+).

Its subcellular location is the nucleus. It is found in the cytoplasm. It carries out the reaction N(6)-acetyl-L-lysyl-[protein] + NAD(+) + H2O = 2''-O-acetyl-ADP-D-ribose + nicotinamide + L-lysyl-[protein]. In terms of biological role, NAD-dependent deacetylase. Involved in metabolism, apoptosis, response to oxidative stress, response to DNA damage, and determination of lifespan. Required for a reduction of the 'Lys-16' acetylation of histone H4 (H4K16ac) on dosage-compensated X chromosomes in hermaphrodites. Plays a role in germ cell and somatic cell apoptosis in response to DNA damage. Functions upstream of daf-16/Forkhead box protein O in the Insulin/IGF-1-like signaling (IIS) mediated pathway, promoting daf-16 mediated transcriptional activation and increased lifespan. May also regulate lifespan independently of daf-16 by modulating the transcription of genes involved in the stress response of the endoplasmic reticulum (ER). Functions upstream of transcriptional coregulator hcf-1, perhaps acting independently of the IIS mediated pathway, to modulate lifespan and oxidative stress response. Acts upstream of the nicotinic acid metabolism pathway, which may be linked to the regulation of longevity. Plays a role in ascaroside-mediated longevity and stress resistance. The sequence is that of NAD-dependent protein deacetylase sir-2.1 from Caenorhabditis elegans.